The chain runs to 723 residues: Malate synthase G (723 aa).

Residues Val-118, 125–126 (RY), Ser-274, and Arg-311 each bind acetyl-CoA. The active-site Proton acceptor is the Arg-338. Residues Arg-338, Glu-427, and 452-455 (GFLD) each bind glyoxylate. Glu-427 and Asp-455 together coordinate Mg(2+). Pro-536 is a binding site for acetyl-CoA. The residue at position 617 (Cys-617) is a Cysteine sulfenic acid (-SOH). The Proton donor role is filled by Asp-631. Cysteine sulfenic acid (-SOH) is present on Cys-688.

It belongs to the malate synthase family. GlcB subfamily. Monomer. Requires Mg(2+) as cofactor.

Its subcellular location is the cytoplasm. The enzyme catalyses glyoxylate + acetyl-CoA + H2O = (S)-malate + CoA + H(+). The protein operates within carbohydrate metabolism; glyoxylate cycle; (S)-malate from isocitrate: step 2/2. Involved in the glycolate utilization. Catalyzes the condensation and subsequent hydrolysis of acetyl-coenzyme A (acetyl-CoA) and glyoxylate to form malate and CoA. In Escherichia coli O6:H1 (strain CFT073 / ATCC 700928 / UPEC), this protein is Malate synthase G.